Consider the following 1026-residue polypeptide: MSSFDIFSPTTSVSGKFFLEASAGTGKTFTIEQVILRSLLEGNVEQTKNILVVTFTNAATNELKLRIQESLKQALTLFSQALSHPETPLPPYVSSQETKVKQLYXKXRNSLATLDEMNIFTIHGLCRFTLEQHFPWVQPIHPSSMFSEPQTIQQYILDYLRQNSWENVLSPKQYAFLSYHHRATTQQTRHLADRLLQDYASTPNLALPPLSITLQKVKNWSSQYKHLSPLSLEELQDFSLRFKQSDLPIDRELPDFVKQFETDPNSLDILFFPGMVQKFQEENRNKKKLGPPFSPLDPFLKDWLLIAQPFCQKEPIFHTLLKSVQQHLKTYCAQSYSHDESIATLESLLAQNDHVVSQLRKQFQLVLIDEFQDTDKRQWKIFSKLFASPDYSGSLFLIGDPKQSIYEWRNADLPTYLQAKNSFPKESQLILDTNYRSTPQLMQALNHLFSLPSPFLETPQTILYHPLQSKGSASTSYSEFRPIHFFTTQDSQEEALWISKTASYLRSTFAIPFGNMAVLVQDYPQALKLITHSTIPMAYCKEKRIFDRTESPYLLILLLEALLYPENQQKIQAILLSRFFHLSATDIHQHLKIFSSLFFMLNTYLHQYSLLATFYKLMGETVFSQTIGETLLQTPLGDIIFQELEELCLYLDKTTENPHHKLFHLINILDTGKYDEELSFSSQSNDDNVLKITTVHSSKGLEYDVVFCSSLNKVKEKSPSVHMREMYVACTRAKKFLFIPFSSIEKRLQSNKKVSALANYANITQHDNIPHLVETLTASHPEFFSSGTQPPESNISIFSEPLPEQEFFSLPILSSQPIYSFSSTTESQYFTEPFQEISSSSLFPGGSLTGTLIHKLLESLSGNFNASLEEITHKAQTLLKNTILEGFESIISEKIYTAFSTKLPFVSGSFALKDVHPYNIRVEETFLLQENGELWQGIVDLFFEHNNRFFIIDWKTSFLGDEPSLYSPDKLLLYIQRQGLDKQGVLYKRAAKKFLHQFNSSLQIEMAFVFIRGIDDKGNGFLQPSP.

Residues methionine 1–threonine 438 form the UvrD-like helicase ATP-binding domain. Residues methionine 1–histidine 766 are DNA-binding and helicase activity, interacts with RecC. An ATP-binding site is contributed by alanine 21 to threonine 28. The 249-residue stretch at proline 452 to glycine 700 folds into the UvrD-like helicase C-terminal domain. Residues serine 815–proline 1026 are nuclease activity, interacts with RecD and RecA. Positions 854, 940, and 953 each coordinate Mg(2+). The For nuclease activity role is filled by aspartate 953.

It belongs to the helicase family. UvrD subfamily. Heterotrimer of RecB, RecC and RecD. All subunits contribute to DNA-binding. Interacts with RecA. It depends on Mg(2+) as a cofactor.

It catalyses the reaction Exonucleolytic cleavage (in the presence of ATP) in either 5'- to 3'- or 3'- to 5'-direction to yield 5'-phosphooligonucleotides.. It carries out the reaction Couples ATP hydrolysis with the unwinding of duplex DNA by translocating in the 3'-5' direction.. The enzyme catalyses ATP + H2O = ADP + phosphate + H(+). In terms of biological role, a helicase/nuclease that prepares dsDNA breaks (DSB) for recombinational DNA repair. Binds to DSBs and unwinds DNA via a highly rapid and processive ATP-dependent bidirectional helicase activity. Unwinds dsDNA until it encounters a Chi (crossover hotspot instigator) sequence from the 3' direction. Cuts ssDNA a few nucleotides 3' to the Chi site. The properties and activities of the enzyme are changed at Chi. The Chi-altered holoenzyme produces a long 3'-ssDNA overhang and facilitates RecA-binding to the ssDNA for homologous DNA recombination and repair. Holoenzyme degrades any linearized DNA that is unable to undergo homologous recombination. In the holoenzyme this subunit contributes ATPase, 3'-5' helicase, exonuclease activity and loads RecA onto ssDNA. This is RecBCD enzyme subunit RecB from Chlamydia muridarum (strain MoPn / Nigg).